The following is a 758-amino-acid chain: 5-methyltetrahydropteroyltriglutamate--homocysteine methyltransferase (758 aa).

5-methyltetrahydropteroyltri-L-glutamate contacts are provided by residues 16–19 and lysine 116; that span reads RELK. L-homocysteine-binding positions include 436–438 and glutamate 489; that span reads IGS. Residues 436-438 and glutamate 489 contribute to the L-methionine site; that span reads IGS. 5-methyltetrahydropteroyltri-L-glutamate is bound by residues 520 to 521 and tryptophan 566; that span reads RC. Position 604 (aspartate 604) interacts with L-homocysteine. Residue aspartate 604 coordinates L-methionine. A 5-methyltetrahydropteroyltri-L-glutamate-binding site is contributed by glutamate 610. Zn(2+)-binding residues include histidine 646, cysteine 648, and glutamate 670. Histidine 699 functions as the Proton donor in the catalytic mechanism. Residue cysteine 731 coordinates Zn(2+).

Belongs to the vitamin-B12 independent methionine synthase family. The cofactor is Zn(2+).

The catalysed reaction is 5-methyltetrahydropteroyltri-L-glutamate + L-homocysteine = tetrahydropteroyltri-L-glutamate + L-methionine. The protein operates within amino-acid biosynthesis; L-methionine biosynthesis via de novo pathway; L-methionine from L-homocysteine (MetE route): step 1/1. Functionally, catalyzes the transfer of a methyl group from 5-methyltetrahydrofolate to homocysteine resulting in methionine formation. The sequence is that of 5-methyltetrahydropteroyltriglutamate--homocysteine methyltransferase from Xylella fastidiosa (strain 9a5c).